A 307-amino-acid chain; its full sequence is G-protein coupled receptor 35 (307 aa).

The Extracellular portion of the chain corresponds to 1-18 (MNSTTCNSTLTWPASVNN). N-linked (GlcNAc...) asparagine glycosylation is found at asparagine 2 and asparagine 7. Residues 19-39 (FFIIYSALLLVLGLLLNSVAL) traverse the membrane as a helical segment. Residues 40–53 (WVFCYRMHQWTETR) lie on the Cytoplasmic side of the membrane. Residues 54–74 (IYMTNLAVADLCLLCSLPFVL) form a helical membrane-spanning segment. At 75–88 (YSLKYSSSDTPVCQ) the chain is on the extracellular side. Cysteine 87 and cysteine 160 are joined by a disulfide. Residues 89 to 110 (LSQGIYLANRYMSISLVTAIAV) form a helical membrane-spanning segment. Residues 111 to 129 (DRYVAVRHPLRARELRSPR) are Cytoplasmic-facing. Residues 130-150 (QAAAVCVALWVIVVTSLVVRW) form a helical membrane-spanning segment. Topologically, residues 151 to 176 (RLGMQEGGFCFSSQTRRNFSTTAFSL) are extracellular. A helical membrane pass occupies residues 177–197 (LGFYLPLAIVVFCSLQVVTVL). The Cytoplasmic portion of the chain corresponds to 198–217 (SRRPAADVGQAEATQKATHM). Residues 218–238 (VWANLAVFVICFLPLHVVLTV) form a helical membrane-spanning segment. At 239–257 (QVSLNLNTCAARDTFSRAL) the chain is on the extracellular side. A helical membrane pass occupies residues 258 to 278 (SITGKLSDTNCCLDAICYYYM). Residues 279–307 (AREFQEASKPATSSNTPHKSQDSQILSLT) are Cytoplasmic-facing. Phosphoserine is present on residues serine 286, serine 292, serine 298, and serine 301. The interval 288 to 307 (PATSSNTPHKSQDSQILSLT) is disordered.

It belongs to the G-protein coupled receptor 1 family. Multiply phosphorylated in clusters of serines and threonines in the C-terminal tail. Phosphorylation of Ser-298 and Ser-301 is mediated by GRK5 and/or GRK6. Predominantly expressed in immune and gastrointestinal tissues. Strongly GPR35 expressed in colonic macrophages.

It is found in the cell membrane. G-protein coupled receptor that binds to several ligands including the tryptophan metabolite kynurenic acid (KYNA), lysophosphatidic acid (LPA) or 5-hydroxyindoleacetic acid (5-HIAA) with high affinity, leading to rapid and transient activation of numerous intracellular signaling pathways. Plays a role in neutrophil recruitment to sites of inflammation and bacterial clearance through the major serotonin metabolite 5-HIAA that acts as a physiological ligand. Stimulates lipid metabolism, thermogenic, and anti-inflammatory gene expression in adipose tissue once activated by kynurenic acid. In macrophages, activation by lysophosphatidic acid promotes GPR35-induced signaling with a distinct transcriptional profile characterized by TNF production associated with ERK and NF-kappa-B activation. In turn, induces chemotaxis of macrophages. This Mus musculus (Mouse) protein is G-protein coupled receptor 35 (Gpr35).